Reading from the N-terminus, the 400-residue chain is Arabinan endo-1,5-alpha-L-arabinosidase B (400 aa).

The first 16 residues, 1 to 16, serve as a signal peptide directing secretion; that stretch reads MAVIFVLFFLVSMALS. N24 is a glycosylation site (N-linked (GlcNAc...) asparagine). Catalysis depends on D70, which acts as the Proton acceptor. The N-linked (GlcNAc...) asparagine glycan is linked to N184. Catalysis depends on E277, which acts as the Proton donor. N-linked (GlcNAc...) asparagine glycosylation occurs at N372.

Belongs to the glycosyl hydrolase 43 family.

It localises to the secreted. The enzyme catalyses Endohydrolysis of (1-&gt;5)-alpha-arabinofuranosidic linkages in (1-&gt;5)-arabinans.. It functions in the pathway glycan metabolism; L-arabinan degradation. Its function is as follows. Endo-1,5-alpha-L-arabinanase involved in degradation of pectin. Its preferred substrate is linear 1,5-alpha-L-arabinan. This Emericella nidulans (strain FGSC A4 / ATCC 38163 / CBS 112.46 / NRRL 194 / M139) (Aspergillus nidulans) protein is Arabinan endo-1,5-alpha-L-arabinosidase B (abnB).